Reading from the N-terminus, the 105-residue chain is Resistin-like beta (105 aa).

A signal peptide spans 1-23 (MKPTLCFLFILVSLFPLIVPGNA). Disulfide bonds link C49–C102, C61–C101, C70–C87, C72–C89, and C76–C91.

The protein belongs to the resistin/FIZZ family. In terms of assembly, homodimer; disulfide-linked. Heterodimer with RETNLG. In terms of tissue distribution, strongly expressed in colon, and at lower levels in ileum. In colon, found throughout the crypt and surface epithelium and in goblet cells (at protein level). Specific to the gastrointestinal tract; not detected in other tissues tested.

It is found in the secreted. Functionally, probable hormone. This Mus musculus (Mouse) protein is Resistin-like beta (Retnlb).